Consider the following 446-residue polypeptide: Alpha-1,6-mannosyl-glycoprotein 2-beta-N-acetylglucosaminyltransferase (446 aa).

At 1–9 (MRFRIYKRK) the chain is on the cytoplasmic side. Residues 10–29 (VLILTFVVAACGFVLWSSNG) traverse the membrane as a helical; Signal-anchor for type II membrane protein segment. Over 30–446 (RQRKNEALAP…ELCKSYRRLQ (417 aa)) the chain is Lumenal. N-linked (GlcNAc...) asparagine glycosylation is found at N69 and N86. Substrate contacts are provided by residues 123-127 (QVHNR) and D154. An intrachain disulfide couples C196 to C210. 229-233 (QTKHH) contributes to the substrate binding site. D261 is a binding site for Mn(2+). A disulfide bridge connects residues C283 and C286. R298 serves as a coordination point for substrate. Intrachain disulfides connect C334–C357, C339–C439, and C378–C386. Residue H374 coordinates Mn(2+).

It belongs to the glycosyltransferase 16 (GT16) protein family. In terms of assembly, homodimer. It depends on Mn(2+) as a cofactor.

It localises to the golgi apparatus membrane. It carries out the reaction an N(4)-{beta-D-GlcNAc-(1-&gt;2)-alpha-D-Man-(1-&gt;3)-[alpha-D-Man-(1-&gt;6)]-beta-D-Man-(1-&gt;4)-beta-D-GlcNAc-(1-&gt;4)-beta-D-GlcNAc}-L-asparaginyl-[protein] + UDP-N-acetyl-alpha-D-glucosamine = N(4)-{beta-D-GlcNAc-(1-&gt;2)-alpha-D-Man-(1-&gt;3)-[beta-D-GlcNAc-(1-&gt;2)-alpha-D-Man-(1-&gt;6)]-beta-D-Man-(1-&gt;4)-beta-D-GlcNAc-(1-&gt;4)-beta-D-GlcNAc}-L-asparaginyl-[protein] + UDP + H(+). It participates in protein modification; protein glycosylation. Its function is as follows. Plays an essential role in protein N-glycosylation. Catalyzes the transfer of N-acetylglucosamine (GlcNAc) onto the free terminal mannose moiety in the core structure of the nascent N-linked glycan chain, giving rise to the second branch in complex glycans. This Sus scrofa (Pig) protein is Alpha-1,6-mannosyl-glycoprotein 2-beta-N-acetylglucosaminyltransferase (MGAT2).